Consider the following 121-residue polypeptide: Large ribosomal subunit protein bL12 (121 aa).

The protein belongs to the bacterial ribosomal protein bL12 family. As to quaternary structure, homodimer. Part of the ribosomal stalk of the 50S ribosomal subunit. Forms a multimeric L10(L12)X complex, where L10 forms an elongated spine to which 2 to 4 L12 dimers bind in a sequential fashion. Binds GTP-bound translation factors.

Its function is as follows. Forms part of the ribosomal stalk which helps the ribosome interact with GTP-bound translation factors. Is thus essential for accurate translation. This is Large ribosomal subunit protein bL12 from Alkaliphilus oremlandii (strain OhILAs) (Clostridium oremlandii (strain OhILAs)).